We begin with the raw amino-acid sequence, 411 residues long: Serine hydroxymethyltransferase (411 aa).

120-122 (GHL) provides a ligand contact to (6S)-5,6,7,8-tetrahydrofolate. K225 is modified (N6-(pyridoxal phosphate)lysine). 350 to 352 (SPF) serves as a coordination point for (6S)-5,6,7,8-tetrahydrofolate.

The protein belongs to the SHMT family. In terms of assembly, homodimer. The cofactor is pyridoxal 5'-phosphate.

It is found in the cytoplasm. It carries out the reaction (6R)-5,10-methylene-5,6,7,8-tetrahydrofolate + glycine + H2O = (6S)-5,6,7,8-tetrahydrofolate + L-serine. The protein operates within one-carbon metabolism; tetrahydrofolate interconversion. It functions in the pathway amino-acid biosynthesis; glycine biosynthesis; glycine from L-serine: step 1/1. Its function is as follows. Catalyzes the reversible interconversion of serine and glycine with tetrahydrofolate (THF) serving as the one-carbon carrier. This reaction serves as the major source of one-carbon groups required for the biosynthesis of purines, thymidylate, methionine, and other important biomolecules. Also exhibits THF-independent aldolase activity toward beta-hydroxyamino acids, producing glycine and aldehydes, via a retro-aldol mechanism. This chain is Serine hydroxymethyltransferase, found in Lactobacillus johnsonii (strain CNCM I-12250 / La1 / NCC 533).